The following is a 370-amino-acid chain: N-acetyltaurine hydrolase (370 aa).

Positions 26, 28, 189, 221, 250, and 318 each coordinate a divalent metal cation.

The protein belongs to the metallo-dependent hydrolases superfamily. Phosphotriesterase family. A divalent metal cation is required as a cofactor.

The protein resides in the cytoplasm. It localises to the cytosol. The catalysed reaction is N-acetyltaurine + H2O = taurine + acetate. Its function is as follows. N-acetyltaurine hydrolase catalyzes the hydrolysis of N-acetyltaurine into taurine and acetate. This is N-acetyltaurine hydrolase (pter) from Dictyostelium discoideum (Social amoeba).